The following is a 154-amino-acid chain: Prefoldin subunit alpha (154 aa).

Polar residues predominate over residues 92–102 (DNAVESLSTKQ). The tract at residues 92–154 (DNAVESLSTK…MQDQQPEDNE (63 aa)) is disordered. Over residues 103–114 (DALDNRIESLRD) the composition is skewed to basic and acidic residues. Low complexity predominate over residues 128–148 (QQAQQMQQQMQQQQMQQMQDQ).

This sequence belongs to the prefoldin subunit alpha family. Heterohexamer of two alpha and four beta subunits.

Its subcellular location is the cytoplasm. In terms of biological role, molecular chaperone capable of stabilizing a range of proteins. Seems to fulfill an ATP-independent, HSP70-like function in archaeal de novo protein folding. This Haloquadratum walsbyi (strain DSM 16790 / HBSQ001) protein is Prefoldin subunit alpha.